The sequence spans 465 residues: Serine carboxypeptidase-like 19 (465 aa).

The N-terminal stretch at 1–23 (MRNLSFIVLFLLTLFFIHHLVDA) is a signal peptide. 77-79 (TGG) serves as a coordination point for substrate. 3 disulfides stabilise this stretch: C82/C353, C246/C260, and C284/C320. The N-linked (GlcNAc...) asparagine glycan is linked to N103. 177–179 (DSY) provides a ligand contact to substrate. Residue S178 is part of the active site. Residues 292–317 (DTPNIRTDRRRVMKEFSVNDSSSLPP) constitute a propeptide, linker peptide. N-linked (GlcNAc...) asparagine glycans are attached at residues N310 and N373. D389 is a catalytic residue. Residue N405 is glycosylated (N-linked (GlcNAc...) asparagine). 439 to 443 (KGGGH) lines the substrate pocket. The active site involves H443.

This sequence belongs to the peptidase S10 family. In terms of assembly, heterodimer. N-glycosylated. Expressed in roots and flowers, and at lower levels in young leaves and seedlings. Expressed in mature seeds and detected in expanding siliques.

The protein localises to the secreted. It catalyses the reaction 1-O-(trans-sinapoyl)-beta-D-glucose + choline = O-sinapoylcholine + D-glucose. Slightly inhibited by phenylmethylsulfonyl fluoride (PMSF). In terms of biological role, involved in plants secondary metabolism. Functions as acyltransferase to form the sinapate ester sinapoylcholine also known as sinapine. Able to convert in vitro benzoylglucose into benzoylcholine. In Arabidopsis thaliana (Mouse-ear cress), this protein is Serine carboxypeptidase-like 19.